The following is a 346-amino-acid chain: Uroporphyrinogen decarboxylase (346 aa).

Residues 26–30 (RQAGR), Asp-76, Tyr-153, Ser-208, and His-323 contribute to the substrate site.

This sequence belongs to the uroporphyrinogen decarboxylase family. As to quaternary structure, homodimer.

It localises to the cytoplasm. It catalyses the reaction uroporphyrinogen III + 4 H(+) = coproporphyrinogen III + 4 CO2. Its pathway is porphyrin-containing compound metabolism; protoporphyrin-IX biosynthesis; coproporphyrinogen-III from 5-aminolevulinate: step 4/4. In terms of biological role, catalyzes the decarboxylation of four acetate groups of uroporphyrinogen-III to yield coproporphyrinogen-III. This is Uroporphyrinogen decarboxylase from Prochlorococcus marinus (strain MIT 9215).